A 160-amino-acid chain; its full sequence is Putative UPF0479 protein YNL339W-B (160 aa).

2 helical membrane-spanning segments follow: residues 39–59 (IVFC…KVLQ) and 136–156 (VPMI…ISQH).

This sequence belongs to the UPF0479 family.

It localises to the membrane. The chain is Putative UPF0479 protein YNL339W-B from Saccharomyces cerevisiae (strain ATCC 204508 / S288c) (Baker's yeast).